The primary structure comprises 199 residues: 7-methyl-GTP pyrophosphatase (199 aa).

The active-site Proton acceptor is the D72.

This sequence belongs to the Maf family. YceF subfamily. It depends on a divalent metal cation as a cofactor.

Its subcellular location is the cytoplasm. It carries out the reaction N(7)-methyl-GTP + H2O = N(7)-methyl-GMP + diphosphate + H(+). Nucleoside triphosphate pyrophosphatase that hydrolyzes 7-methyl-GTP (m(7)GTP). May have a dual role in cell division arrest and in preventing the incorporation of modified nucleotides into cellular nucleic acids. The chain is 7-methyl-GTP pyrophosphatase from Alkalilimnicola ehrlichii (strain ATCC BAA-1101 / DSM 17681 / MLHE-1).